The following is a 430-amino-acid chain: Histidine--tRNA ligase (430 aa).

It belongs to the class-II aminoacyl-tRNA synthetase family. In terms of assembly, homodimer.

Its subcellular location is the cytoplasm. The enzyme catalyses tRNA(His) + L-histidine + ATP = L-histidyl-tRNA(His) + AMP + diphosphate + H(+). In Clostridium acetobutylicum (strain ATCC 824 / DSM 792 / JCM 1419 / IAM 19013 / LMG 5710 / NBRC 13948 / NRRL B-527 / VKM B-1787 / 2291 / W), this protein is Histidine--tRNA ligase (hisS).